The chain runs to 120 residues: Aspartate 1-decarboxylase (120 aa).

The active-site Schiff-base intermediate with substrate; via pyruvic acid is S25. Position 25 is a pyruvic acid (Ser) (S25). T57 is a binding site for substrate. Y58 serves as the catalytic Proton donor. 73-75 (GAA) is a substrate binding site.

The protein belongs to the PanD family. Heterooctamer of four alpha and four beta subunits. Requires pyruvate as cofactor. Post-translationally, is synthesized initially as an inactive proenzyme, which is activated by self-cleavage at a specific serine bond to produce a beta-subunit with a hydroxyl group at its C-terminus and an alpha-subunit with a pyruvoyl group at its N-terminus.

Its subcellular location is the cytoplasm. The enzyme catalyses L-aspartate + H(+) = beta-alanine + CO2. The protein operates within cofactor biosynthesis; (R)-pantothenate biosynthesis; beta-alanine from L-aspartate: step 1/1. Catalyzes the pyruvoyl-dependent decarboxylation of aspartate to produce beta-alanine. This Coprothermobacter proteolyticus (strain ATCC 35245 / DSM 5265 / OCM 4 / BT) protein is Aspartate 1-decarboxylase.